The chain runs to 238 residues: Purine nucleoside phosphorylase DeoD-type 1 (238 aa).

Position 5 (histidine 5) interacts with a purine D-ribonucleoside. Phosphate-binding positions include glycine 21, arginine 25, arginine 44, and 88–91; that span reads RVGS. A purine D-ribonucleoside is bound by residues 180 to 182 and 204 to 205; these read EME and SD. Aspartate 205 functions as the Proton donor in the catalytic mechanism.

The protein belongs to the PNP/UDP phosphorylase family. Homohexamer; trimer of homodimers.

It catalyses the reaction a purine D-ribonucleoside + phosphate = a purine nucleobase + alpha-D-ribose 1-phosphate. It carries out the reaction a purine 2'-deoxy-D-ribonucleoside + phosphate = a purine nucleobase + 2-deoxy-alpha-D-ribose 1-phosphate. In terms of biological role, catalyzes the reversible phosphorolytic breakdown of the N-glycosidic bond in the beta-(deoxy)ribonucleoside molecules, with the formation of the corresponding free purine bases and pentose-1-phosphate. The chain is Purine nucleoside phosphorylase DeoD-type 1 from Aliivibrio fischeri (strain ATCC 700601 / ES114) (Vibrio fischeri).